The following is a 152-amino-acid chain: Large ribosomal subunit protein bL9 (152 aa).

This sequence belongs to the bacterial ribosomal protein bL9 family.

In terms of biological role, binds to the 23S rRNA. The protein is Large ribosomal subunit protein bL9 of Gloeothece citriformis (strain PCC 7424) (Cyanothece sp. (strain PCC 7424)).